Reading from the N-terminus, the 616-residue chain is Ectonucleoside triphosphate diphosphohydrolase 4 (616 aa).

Over 1–33 (MGRIGISCLFPASWHFSISPVGCPRILNTNLRQ) the chain is Cytoplasmic. A helical transmembrane segment spans residues 34–54 (IMVISVLAAAVSLLYFSVVII). Topologically, residues 55 to 559 (RNKYGRLTRD…ASHTHWRGVS (505 aa)) are lumenal. The active-site Proton acceptor is Glu222. A disulfide bridge links Cys368 with Cys395. N-linked (GlcNAc...) asparagine glycosylation is found at Asn404 and Asn407. A disulfide bridge links Cys461 with Cys490. The helical transmembrane segment at 560 to 580 (FVYNHYLFSGCFLVVLLAILL) threads the bilayer. At 581 to 616 (YLLRLRRIHRRTPRSSSAAALWMEEGLPAQNAPGTL) the chain is on the cytoplasmic side.

This sequence belongs to the GDA1/CD39 NTPase family. Ca(2+) is required as a cofactor. Mg(2+) serves as cofactor. As to expression, ubiquitous. Highest expression in testis and lowest in bladder.

It localises to the cytoplasmic vesicle. The protein localises to the autophagosome membrane. It is found in the lysosome membrane. The protein resides in the golgi apparatus membrane. It carries out the reaction a ribonucleoside 5'-diphosphate + H2O = a ribonucleoside 5'-phosphate + phosphate + H(+). The enzyme catalyses a ribonucleoside 5'-triphosphate + H2O = a ribonucleoside 5'-diphosphate + phosphate + H(+). It catalyses the reaction UDP + H2O = UMP + phosphate + H(+). The catalysed reaction is UTP + H2O = UDP + phosphate + H(+). It carries out the reaction CTP + H2O = CDP + phosphate + H(+). The enzyme catalyses GDP + H2O = GMP + phosphate + H(+). It catalyses the reaction GTP + H2O = GDP + phosphate + H(+). The catalysed reaction is 5-methyl-UTP + H2O = 5-methyl-UDP + phosphate + H(+). Its function is as follows. Catalyzes the hydrolysis of nucleoside triphosphates and diphosphates in a calcium- or magnesium-dependent manner, with a preference for pyrimidines. Preferentially hydrolyzes UTP and TTP. AMP, ADP, ATP and UMP are not substrates. Preferentially activated by Ca(2+) over Mg(2+). Has a broad substrate specificity with the ability of cleaving all nucleotide di- and triphosphates with the exception of adenosine di- and triphosphate (ADP and ATP). Preferentially hydrolyzes CTP, UDP, CDP, GTP and GDP. Can use either Ca(2+) or Mg(2+) equally. The chain is Ectonucleoside triphosphate diphosphohydrolase 4 from Homo sapiens (Human).